A 519-amino-acid chain; its full sequence is NEQANLRLSEANSGTYKTFIGRVREELGSETYRLYGIPVLKHSLSNSNRFYLLTLTSNQDESITLAIDVEDMVAVAYQPAGSHESYFFLNAPQIAFHTLFTDTHQNVLNFDNTFKSLENAAGTTRQTIVLGVDPLDFAISNLFNADPKLLPLSFLVIIQMVLEASKFRFIEQSVAYSFKNEKTFLPDLAIVSLEDNWSEISLQIQASTSLQGLFGSVVELYNSNNELIEVDSIYYPIILANVALQLYHCQVSTGDNECLVETRTTRISGRDALCVDVAGALTSDGSRLILYPCGQQVNQKWTFHSDGTVRSLGKCLATNNSKFGNLVVIYDCSKLAAEDISWDVSVGGTIMNPNYEDLALTSNKATRSTNLTMEVNTYSASQGWRVGNYVQPIIGSIVGLDDMCLEATDGNTNMWLEECVPNQREQSWALYSDGTIRVDDNRELCVTASSSTYDNWKVITILNCDGSNNQRWVFLADGSISTPGNQRLAMDVARSDVDLKKIILHRPHGDLNQQWVLFY.

2 disulfides stabilise this stretch: cysteine 249-cysteine 258 and cysteine 274-cysteine 293. Ricin B-type lectin domains lie at glutamate 261–glycine 387 and valine 390–phenylalanine 518. Residues aspartate 271–serine 311 form a 1-alpha repeat. A carbohydrate contacts are provided by residues aspartate 276 to glycine 279 and glutamine 296 to asparagine 298. Residues leucine 312–asparagine 352 form a 1-beta repeat. The cysteines at positions 315 and 332 are disulfide-linked. One copy of the 1-gamma repeat lies at glutamate 356–asparagine 388. A glycan (N-linked (GlcNAc...) asparagine) is linked at asparagine 370. The 2-alpha repeat unit spans residues aspartate 401–valine 438. 2 cysteine pairs are disulfide-bonded: cysteine 404–cysteine 419 and cysteine 445–cysteine 464. The 2-beta repeat unit spans residues arginine 442 to threonine 482. A carbohydrate is bound by residues aspartate 454, aspartate 491 to arginine 494, histidine 505 to histidine 508, and asparagine 512. The 2-gamma repeat unit spans residues glutamine 486 to glutamine 513.

This sequence in the N-terminal section; belongs to the ribosome-inactivating protein family. Type 2 RIP subfamily. In terms of assembly, heterotrimer consisting of Aalpha, Abeta and B chains with Abeta and B being disulfide-linked.

In terms of biological role, seed lectin similar to type 2 ribosome-inactivating proteins. The Aalpha and Abeta chains constitute the rRNA glycosidase domain and the B chain the carbohydrate-binding lectin domain. Is predicted to have no glycosidase activity and, hence, to be non-toxic, due to small changes in both the nucleotide binding and carbohydrate binding capabilities. Binds galactose and derivatives with a preference for the beta-anomeric forms. Binds prophyrins. Has hemagglutinating activity towards rabbit and human erythrocytes. This Trichosanthes anguina (Snake gourd) protein is Seed lectin.